The sequence spans 282 residues: L-allo-isoleucyltransferase (282 aa).

C105 serves as the catalytic Acyl-thioester intermediate. The AB hydrolase-1 domain occupies 169-261; that stretch reads HTQSTYTPSD…DGQHHDFVDG (93 aa).

Belongs to the AB hydrolase superfamily.

The enzyme catalyses holo-[CmaD peptidyl-carrier protein] + L-alloisoleucyl-[CmaA peptidyl-carrier protein] = L-alloisoleucyl-[CmaD peptidyl-carrier protein] + holo-[CmaA peptidyl-carrier protein]. In terms of biological role, involved in the biosynthesis of the phytotoxin coronatine (COR). Catalyzes the transfer of the aminoacyl group covalently attached to the pantetheinyl arm of CmaA to the holo-pantetheinyl arm of CmaD. During the shuttling process, CmaE generates a covalent-aminoacyl-S-Cys enzyme intermediate by the action of its donor substrate L-aminoacyl-S-CmaA and delivers it to the sulfhydryl group attached to the phosphopantetheinyl arm on CmaD. This is L-allo-isoleucyltransferase from Pseudomonas savastanoi pv. glycinea (Pseudomonas syringae pv. glycinea).